The chain runs to 193 residues: Phosphoheptose isomerase (193 aa).

An SIS domain is found at 37–193 (LADSFKAGGK…QLIEKEMVKA (157 aa)). 52-54 (NGG) provides a ligand contact to substrate. Zn(2+) is bound by residues His-61 and Glu-65. Residues Glu-65, 93 to 94 (ND), 119 to 121 (STS), Ser-124, and Gln-172 each bind substrate. Residues Gln-172 and His-180 each coordinate Zn(2+).

The protein belongs to the SIS family. GmhA subfamily. In terms of assembly, homotetramer. Zn(2+) is required as a cofactor.

It localises to the cytoplasm. It carries out the reaction 2 D-sedoheptulose 7-phosphate = D-glycero-alpha-D-manno-heptose 7-phosphate + D-glycero-beta-D-manno-heptose 7-phosphate. Its pathway is carbohydrate biosynthesis; D-glycero-D-manno-heptose 7-phosphate biosynthesis; D-glycero-alpha-D-manno-heptose 7-phosphate and D-glycero-beta-D-manno-heptose 7-phosphate from sedoheptulose 7-phosphate: step 1/1. Catalyzes the isomerization of sedoheptulose 7-phosphate in D-glycero-D-manno-heptose 7-phosphate. In Serratia proteamaculans (strain 568), this protein is Phosphoheptose isomerase.